An 854-amino-acid polypeptide reads, in one-letter code: DNA mismatch repair protein MutS (854 aa).

Gly-608–Ser-615 is a binding site for ATP.

The protein belongs to the DNA mismatch repair MutS family.

Functionally, this protein is involved in the repair of mismatches in DNA. It is possible that it carries out the mismatch recognition step. This protein has a weak ATPase activity. The sequence is that of DNA mismatch repair protein MutS from Leuconostoc mesenteroides subsp. mesenteroides (strain ATCC 8293 / DSM 20343 / BCRC 11652 / CCM 1803 / JCM 6124 / NCDO 523 / NBRC 100496 / NCIMB 8023 / NCTC 12954 / NRRL B-1118 / 37Y).